Reading from the N-terminus, the 148-residue chain is Protein NrdI (148 aa).

It belongs to the NrdI family.

In terms of biological role, probably involved in ribonucleotide reductase function. The protein is Protein NrdI of Mycolicibacterium gilvum (strain PYR-GCK) (Mycobacterium gilvum (strain PYR-GCK)).